We begin with the raw amino-acid sequence, 128 residues long: Anti-sigma-F factor antagonist RsfA (128 aa).

One can recognise an STAS domain in the interval 17 to 128 (LKATIQHHDS…PTTESALSAT (112 aa)). Cys-73 and Cys-109 are disulfide-bonded.

This sequence belongs to the anti-sigma-factor antagonist family. As to quaternary structure, monomer. Interacts with anti-sigma-F factor RsbW (UsfX).

In terms of biological role, positive, redox-sensitive regulator of sigma-F (SigF) activity. When reduced binds to anti-sigma-F factor RsbW (UsfX) preventing its binding to SigF, thus activating transcription. The chain is Anti-sigma-F factor antagonist RsfA (rsfA) from Mycobacterium tuberculosis (strain CDC 1551 / Oshkosh).